Reading from the N-terminus, the 208-residue chain is Uracil phosphoribosyltransferase (208 aa).

5-phospho-alpha-D-ribose 1-diphosphate-binding positions include arginine 78, arginine 103, and 130 to 138 (DPMLATGGS). Uracil is bound by residues isoleucine 193 and 198–200 (GDA). Position 199 (aspartate 199) interacts with 5-phospho-alpha-D-ribose 1-diphosphate.

The protein belongs to the UPRTase family. Mg(2+) serves as cofactor.

It catalyses the reaction UMP + diphosphate = 5-phospho-alpha-D-ribose 1-diphosphate + uracil. Its pathway is pyrimidine metabolism; UMP biosynthesis via salvage pathway; UMP from uracil: step 1/1. Allosterically activated by GTP. Its function is as follows. Catalyzes the conversion of uracil and 5-phospho-alpha-D-ribose 1-diphosphate (PRPP) to UMP and diphosphate. This is Uracil phosphoribosyltransferase from Wolinella succinogenes (strain ATCC 29543 / DSM 1740 / CCUG 13145 / JCM 31913 / LMG 7466 / NCTC 11488 / FDC 602W) (Vibrio succinogenes).